A 26-amino-acid polypeptide reads, in one-letter code: Turripeptide OL57 (26 aa).

Post-translationally, contains 2 disulfide bonds. As to expression, expressed by the venom duct.

Its subcellular location is the secreted. Its function is as follows. Acts as a neurotoxin by inhibiting an ion channel. In Iotyrris olangoensis (Sea snail), this protein is Turripeptide OL57.